The following is a 418-amino-acid chain: MNQSAEIICVGTELLLGEILNSNAQFLAQQLAQLGIPHYYQTVVGDNPVRLKKAVAIACERSRLLIFTGGLGPTPDDLTTETLADFFDLPLVEHPEILADITRKYAHRGRTITANNRKQALLPLGAAILPNPTGTAPGMIWHPRPSLTVLTFPGVPSEMQCMWQETAIPYLRAQGWGQEMIYSQVLRFWGIAESALAERVAPFLELASPTVAPYASHGEARLRISVRAANETEALEQIQPIATQIHQLTGLDCYGSDEDSLASVLGKLLHSRQETLSVAESCTGGGLGQMLTAIPGSSAYFWGGVISYDNQVKISLLGVDPDTLTRVGAVSAAVAEQMALGVRSRLETTWGLSITGIAGPGGGTETKPVGLVYIGLAGPAGVEHYECRFSDFRGRDWIRHLSACTALDYLRRKLLTLG.

Belongs to the CinA family.

The protein is CinA-like protein of Cyanothece sp. (strain PCC 7425 / ATCC 29141).